Here is a 594-residue protein sequence, read N- to C-terminus: MRETLEALNSLGFSVGQPEMAPQSEPRDGFSNPQEKMSSRDESTLHSCSGPETPGQKEGIHTEQAEAPCMGSQACIPQKAEPASSVPGEEWMIRKVKVEDEDQEAEEEVEWPQHLSFLPSPFPTPDLGQLAVAYKLEPGTPGTLGGIALSGWAPIPEKPYGCEECERRFRDQLTLRLHQRLHRGEGPCACPDCGRSFTQRAHMLLHQRSHRGERPFPCSECDKRFSKKAHLTRHLRTHTGERPYPCAECGKRFSQKIHLGSHQKTHTGERPFPCTECEKRFRKKTHLIRHQRIHTGERPYQCTQCTRSFTHKQHLVRHQRVHDAASRTRSSPDIPATPHPPTASLAPSPTGPKPFACSHCGQSFGWKKNLATHQSLHLTEGRPFGCDECALGTNVDPAAEPSACTPHAPDCGPGSGPVAPQRTTSSERSFFCPDCGRGFAHGQHLARHRRVHTGERPFACAQCGRRFGSRPNLVAHSRAHSGARPFACAQCGRRFSRKSHLGRHQAVHTGSRPHACAVCARCFSSKTNLVRHQAIHTGSRPFSCPQCAKSFSRKTHLVRHQRIHGEAALPASASNLSAPAWSNPSEVVPPPIFF.

Residues 1-70 (MRETLEALNS…HTEQAEAPCM (70 aa)) form a disordered region. Lysine 97 is covalently cross-linked (Glycyl lysine isopeptide (Lys-Gly) (interchain with G-Cter in SUMO2)). C2H2-type zinc fingers lie at residues 160-182 (YGCE…QRLH), 188-210 (CACP…QRSH), 216-238 (FPCS…LRTH), 244-266 (YPCA…QKTH), 272-294 (FPCT…QRIH), 300-322 (YQCT…QRVH), 355-377 (FACS…QSLH), 430-452 (FFCP…RRVH), 458-480 (FACA…SRAH), 486-508 (FACA…QAVH), 514-536 (HACA…QAIH), and 542-564 (FSCP…QRIH). A disordered region spans residues 313-350 (QHLVRHQRVHDAASRTRSSPDIPATPHPPTASLAPSPT). Lysine 368 participates in a covalent cross-link: Glycyl lysine isopeptide (Lys-Gly) (interchain with G-Cter in SUMO2).

It belongs to the krueppel C2H2-type zinc-finger protein family. Interacts with STAT3. Enhances STAT3 activity by keeping it in the nucleus.

It is found in the nucleus. Functionally, transcription factor that promotes adipocyte differentiation and suppresses osteoblast differentiation in the bone marrow. Enhances the osteoclast-supporting ability of stromal cells. Binds with STAT3 the consensus sequence 5'-CTTCTGGGAAGA-3' of the acute phase response element (APRE). Transactivates several promoters including FOS, OSM and PPARG. Recruits a histone deacetylase complex. In Rattus norvegicus (Rat), this protein is Zinc finger protein 467 (Znf467).